Consider the following 1349-residue polypeptide: Zinc finger protein 804B (1349 aa).

The C2H2-type zinc-finger motif lies at 55-79 (FYCELCDKQYHKHQEFDNHINSYDH). Residues 985-1010 (YASESRNDQDSAIPRTTEKDKSKSSH) form a disordered region.

The sequence is that of Zinc finger protein 804B (ZNF804B) from Homo sapiens (Human).